The sequence spans 451 residues: MLLNPLFAQLGENRHVLVGFSGGLDSTVLLHLLVCLRQQLIPELNIRAIHIHHGLNPQADSWVKHCMQQCDQWKIELKVVRVNIDPRQNGIEAAARTARYQAFSANLAAKEVLLTAQHLDDQCETFLLALKRGSGPAGLSAMAAKMPFAHSQLLRPLLAFSREILENYAQAQQLQWIEDDSNQDDRFDRNFLRLNVLPILNQRWPHFAQATARSAGLCAEQEQLLDELLAENLQQLQGPDRSLSIDGLLQASMAKRAAILRRWLASLGAPMPSQSQLQRLWLEVAMARQDAEPQLMIGTRQVRRFRQHLYLLMPLAEITTNYLPWATVKATPNSSIIPLLPEPLWLPADLGVLRFVSAGGQAVRPATVGEEISVRFGLQGDIKIVGRHHSRQSKKVWQELGIPPWQRERIPLLYFGEQLIAAAGVFVTQAGQANENEPCWHLDWDKQLKLG.

Residue S21–S26 participates in ATP binding.

This sequence belongs to the tRNA(Ile)-lysidine synthase family.

The protein resides in the cytoplasm. It carries out the reaction cytidine(34) in tRNA(Ile2) + L-lysine + ATP = lysidine(34) in tRNA(Ile2) + AMP + diphosphate + H(+). Ligates lysine onto the cytidine present at position 34 of the AUA codon-specific tRNA(Ile) that contains the anticodon CAU, in an ATP-dependent manner. Cytidine is converted to lysidine, thus changing the amino acid specificity of the tRNA from methionine to isoleucine. In Yersinia pseudotuberculosis serotype O:1b (strain IP 31758), this protein is tRNA(Ile)-lysidine synthase.